Here is a 487-residue protein sequence, read N- to C-terminus: Zinc finger protein 345 (487 aa).

15 consecutive C2H2-type zinc fingers follow at residues 62-84 (LECKECGKDFSFVSVLIRHQRIH), 90-112 (YECKECGKAFGSGANLAYHQRIH), 118-140 (YECNECGKAFGSGSNLTHHQRIH), 146-168 (YECKECGKAFSFGSGLIRHQIIH), 174-196 (YECKVCGKSFSFESALTRHHRIH), 202-224 (YECKDCGKAFGSGSNLTQHRRVH), 230-252 (YECKGCGMAFSSGSALTRHQRIH), 258-280 (YICNECGKAFSFGSALTRHQRIH), 286-308 (YVCKECGKAFNSGSDLTQHQRIH), 314-336 (YECKECEKAFRSGSKLIQHQRMH), 342-364 (YECKECGKAFSSGSDLTQHQRIH), 370-392 (YECKECGKAFASGSKLIQHQLIH), 398-420 (YECRECRKSFSSGSALNRHQRIH), 426-448 (YECKECEKTFGTGSTLTQHQRMH), and 454-476 (YECKACGKALGRGSEIQQHKKNH).

This sequence belongs to the krueppel C2H2-type zinc-finger protein family.

Its subcellular location is the nucleus. In terms of biological role, may be involved in transcriptional regulation. The sequence is that of Zinc finger protein 345 (ZNF345) from Bos taurus (Bovine).